A 117-amino-acid chain; its full sequence is DNA-directed RNA polymerase subunit omega (117 aa).

This sequence belongs to the RNA polymerase subunit omega family. In terms of assembly, the RNAP catalytic core consists of 2 alpha, 1 beta, 1 beta' and 1 omega subunit. When a sigma factor is associated with the core the holoenzyme is formed, which can initiate transcription.

The catalysed reaction is RNA(n) + a ribonucleoside 5'-triphosphate = RNA(n+1) + diphosphate. Functionally, promotes RNA polymerase assembly. Latches the N- and C-terminal regions of the beta' subunit thereby facilitating its interaction with the beta and alpha subunits. This Cereibacter sphaeroides (strain ATCC 17025 / ATH 2.4.3) (Rhodobacter sphaeroides) protein is DNA-directed RNA polymerase subunit omega.